A 574-amino-acid chain; its full sequence is Sulfite reductase [NADPH] hemoprotein beta-component (574 aa).

The [4Fe-4S] cluster site is built by Cys-439, Cys-445, Cys-484, and Cys-488. Cys-488 serves as a coordination point for siroheme.

This sequence belongs to the nitrite and sulfite reductase 4Fe-4S domain family. Alpha(8)-beta(8). The alpha component is a flavoprotein, the beta component is a hemoprotein. Siroheme is required as a cofactor. [4Fe-4S] cluster serves as cofactor.

It carries out the reaction hydrogen sulfide + 3 NADP(+) + 3 H2O = sulfite + 3 NADPH + 4 H(+). It functions in the pathway sulfur metabolism; hydrogen sulfide biosynthesis; hydrogen sulfide from sulfite (NADPH route): step 1/1. In terms of biological role, component of the sulfite reductase complex that catalyzes the 6-electron reduction of sulfite to sulfide. This is one of several activities required for the biosynthesis of L-cysteine from sulfate. The sequence is that of Sulfite reductase [NADPH] hemoprotein beta-component from Paenibacillus sp. (strain JDR-2).